Reading from the N-terminus, the 364-residue chain is DNA polymerase IV (364 aa).

The region spanning 14–198 (IIHIDMDAFF…LPVEKFHGVG (185 aa)) is the UmuC domain. The Mg(2+) site is built by aspartate 18 and aspartate 116. The active site involves glutamate 117.

Belongs to the DNA polymerase type-Y family. As to quaternary structure, monomer. It depends on Mg(2+) as a cofactor.

The protein localises to the cytoplasm. It catalyses the reaction DNA(n) + a 2'-deoxyribonucleoside 5'-triphosphate = DNA(n+1) + diphosphate. Poorly processive, error-prone DNA polymerase involved in untargeted mutagenesis. Copies undamaged DNA at stalled replication forks, which arise in vivo from mismatched or misaligned primer ends. These misaligned primers can be extended by PolIV. Exhibits no 3'-5' exonuclease (proofreading) activity. May be involved in translesional synthesis, in conjunction with the beta clamp from PolIII. In Lactococcus lactis subsp. cremoris (strain SK11), this protein is DNA polymerase IV.